A 187-amino-acid chain; its full sequence is uncharacterized protein (187 aa).

In terms of domain architecture, HTH tetR-type spans 6 to 66; sequence TDLAEQIFSA…QFAHRVFSMF (61 aa). Positions 29 to 48 form a DNA-binding region, H-T-H motif; sequence SMLKLAKEANVAAGTIYLYF.

This is an uncharacterized protein from Haemophilus influenzae (strain ATCC 51907 / DSM 11121 / KW20 / Rd).